A 283-amino-acid polypeptide reads, in one-letter code: Probable protein phosphatase 2C 58 (283 aa).

Residues 35–282 (THGFHCVKGK…DDISCIVVKF (248 aa)) enclose the PPM-type phosphatase domain. Positions 72, 73, 234, and 273 each coordinate Mn(2+).

It belongs to the PP2C family. Mg(2+) is required as a cofactor. It depends on Mn(2+) as a cofactor.

It carries out the reaction O-phospho-L-seryl-[protein] + H2O = L-seryl-[protein] + phosphate. The catalysed reaction is O-phospho-L-threonyl-[protein] + H2O = L-threonyl-[protein] + phosphate. The chain is Probable protein phosphatase 2C 58 from Arabidopsis thaliana (Mouse-ear cress).